A 245-amino-acid chain; its full sequence is Nodulation protein G (245 aa).

11–35 (VTGASGAIGGAIARVLHAQGAIVGL) provides a ligand contact to NAD(+). S139 serves as a coordination point for substrate. Y152 functions as the Proton acceptor in the catalytic mechanism.

This sequence belongs to the short-chain dehydrogenases/reductases (SDR) family.

In terms of biological role, proposed to modify Nod factor fatty acyl chain. The polypeptide is Nodulation protein G (nodG) (Rhizobium meliloti (strain 1021) (Ensifer meliloti)).